A 504-amino-acid chain; its full sequence is Catalase (504 aa).

The interval 1–25 (MSKQDGKLTGLFGAPVSDRENSMTA) is disordered. Active-site residues include His56 and Asn129. Tyr339 contacts heme.

It belongs to the catalase family. As to quaternary structure, homodimer. It depends on heme as a cofactor.

It catalyses the reaction 2 H2O2 = O2 + 2 H2O. Functionally, decomposes hydrogen peroxide into water and oxygen; serves to protect cells from the toxic effects of hydrogen peroxide. The protein is Catalase (katA) of Staphylococcus epidermidis (strain ATCC 35984 / DSM 28319 / BCRC 17069 / CCUG 31568 / BM 3577 / RP62A).